The sequence spans 295 residues: Indole-3-glycerol phosphate synthase (295 aa).

The protein belongs to the TrpC family.

It carries out the reaction 1-(2-carboxyphenylamino)-1-deoxy-D-ribulose 5-phosphate + H(+) = (1S,2R)-1-C-(indol-3-yl)glycerol 3-phosphate + CO2 + H2O. It functions in the pathway amino-acid biosynthesis; L-tryptophan biosynthesis; L-tryptophan from chorismate: step 4/5. This is Indole-3-glycerol phosphate synthase from Synechococcus sp. (strain ATCC 27144 / PCC 6301 / SAUG 1402/1) (Anacystis nidulans).